The chain runs to 551 residues: L-lactate permease (551 aa).

12 helical membrane-spanning segments follow: residues 13–33 (NIWL…FALI), 37–57 (LKGY…ALLF), 70–90 (VYGF…AVFV), 131–151 (GAAG…GLGF), 159–179 (LCLI…PILV), 194–214 (MVGR…MAIM), 244–264 (FIGP…CLTL), 366–386 (FDWF…SIVW), 405–425 (LALP…SNYS), 438–458 (TGHA…FLTG), 494–514 (VTGK…VGLV), and 530–550 (IFTC…TWMI).

This sequence belongs to the lactate permease family.

The protein localises to the cell inner membrane. The enzyme catalyses (S)-lactate(in) + H(+)(in) = (S)-lactate(out) + H(+)(out). The catalysed reaction is (R)-lactate(in) + H(+)(in) = (R)-lactate(out) + H(+)(out). It catalyses the reaction glycolate(in) + H(+)(in) = glycolate(out) + H(+)(out). Uptake of L-lactate across the membrane. Can also transport D-lactate and glycolate. Seems to be driven by a proton motive force. The sequence is that of L-lactate permease (lldP) from Escherichia coli O6:H1 (strain CFT073 / ATCC 700928 / UPEC).